A 370-amino-acid chain; its full sequence is Phospho-N-acetylmuramoyl-pentapeptide-transferase (370 aa).

The next 10 membrane-spanning stretches (helical) occupy residues 3-23 (QIII…PVLI), 54-74 (GLAI…YGLL), 79-99 (AFTA…AVGF), 118-138 (AKLI…LRFP), 161-181 (LAVG…YILI), 197-217 (LAAG…FWQF), 238-258 (LAVL…WNAA), 262-282 (IFMG…ISVT), 290-310 (IIIG…IVVF), and 341-361 (FWLL…GDWL).

This sequence belongs to the glycosyltransferase 4 family. MraY subfamily. It depends on Mg(2+) as a cofactor.

Its subcellular location is the cell membrane. The enzyme catalyses UDP-N-acetyl-alpha-D-muramoyl-L-alanyl-gamma-D-glutamyl-meso-2,6-diaminopimeloyl-D-alanyl-D-alanine + di-trans,octa-cis-undecaprenyl phosphate = di-trans,octa-cis-undecaprenyl diphospho-N-acetyl-alpha-D-muramoyl-L-alanyl-D-glutamyl-meso-2,6-diaminopimeloyl-D-alanyl-D-alanine + UMP. The protein operates within cell wall biogenesis; peptidoglycan biosynthesis. Functionally, catalyzes the initial step of the lipid cycle reactions in the biosynthesis of the cell wall peptidoglycan: transfers peptidoglycan precursor phospho-MurNAc-pentapeptide from UDP-MurNAc-pentapeptide onto the lipid carrier undecaprenyl phosphate, yielding undecaprenyl-pyrophosphoryl-MurNAc-pentapeptide, known as lipid I. This is Phospho-N-acetylmuramoyl-pentapeptide-transferase from Corynebacterium aurimucosum (strain ATCC 700975 / DSM 44827 / CIP 107346 / CN-1) (Corynebacterium nigricans).